Here is a 513-residue protein sequence, read N- to C-terminus: Putative thymidine phosphorylase (513 aa).

The protein belongs to the thymidine/pyrimidine-nucleoside phosphorylase family. Type 2 subfamily.

The enzyme catalyses thymidine + phosphate = 2-deoxy-alpha-D-ribose 1-phosphate + thymine. This is Putative thymidine phosphorylase from Rhodopseudomonas palustris (strain BisB18).